A 940-amino-acid chain; its full sequence is Lysine-specific demethylase 7A (940 aa).

The PHD-type zinc finger occupies P37–L88. The linker stretch occupies residues R97–P114. Residues F230–K386 form the JmjC domain. A substrate-binding site is contributed by T279. 2 residues coordinate Fe cation: H282 and D284. K299 contributes to the substrate binding site. Position 354 (H354) interacts with Fe cation. 5 disordered regions span residues V483–R509, L599–T670, S710–S729, N818–I854, and S876–A920. S604 is modified (phosphoserine). Polar residues predominate over residues T613–S623. The span at S714 to C724 shows a compositional bias: basic and acidic residues.

The protein belongs to the JHDM1 histone demethylase family. JHDM1D subfamily. It depends on Fe(2+) as a cofactor.

Its subcellular location is the nucleus. The enzyme catalyses N(6),N(6)-dimethyl-L-lysyl(9)-[histone H3] + 2 2-oxoglutarate + 2 O2 = L-lysyl(9)-[histone H3] + 2 formaldehyde + 2 succinate + 2 CO2. It catalyses the reaction N(6),N(6)-dimethyl-L-lysyl(27)-[histone H3] + 2 2-oxoglutarate + 2 O2 = L-lysyl(27)-[histone H3] + 2 formaldehyde + 2 succinate + 2 CO2. It carries out the reaction N(6),N(6)-dimethyl-L-lysyl(36)-[histone H3] + 2-oxoglutarate + O2 = N(6)-methyl-L-lysyl(36)-[histone H3] + formaldehyde + succinate + CO2. The catalysed reaction is N(6)-methyl-L-lysyl(20)-[histone H4] + 2-oxoglutarate + O2 = L-lysyl(20)-[histone H4] + formaldehyde + succinate + CO2. Histone demethylase required for brain development. Specifically demethylates dimethylated 'Lys-9', 'Lys-27' and 'Lys-36' (H3K9me2, H3K27me2, H3K36me2, respectively) of histone H3 and monomethylated histone H4 'Lys-20' residue (H4K20Me1), thereby playing a central role in histone code. Specifically binds trimethylated 'Lys-4' of histone H3 (H3K4me3), affecting histone demethylase specificity: in presence of H3K4me3, it has no demethylase activity toward H3K9me2, while it has high activity toward H3K27me2. Demethylates H3K9me2 in absence of H3K4me3. Has activity toward H4K20Me1 only when nucleosome is used as a substrate and when not histone octamer is used as substrate. This is Lysine-specific demethylase 7A (Kdm7a) from Mus musculus (Mouse).